Consider the following 413-residue polypeptide: Arginine biosynthesis bifunctional protein ArgJ (413 aa).

Substrate contacts are provided by threonine 163, lysine 189, threonine 200, glutamate 286, asparagine 408, and threonine 413. Threonine 200 (nucleophile) is an active-site residue.

This sequence belongs to the ArgJ family. In terms of assembly, heterotetramer of two alpha and two beta chains.

It is found in the cytoplasm. The enzyme catalyses N(2)-acetyl-L-ornithine + L-glutamate = N-acetyl-L-glutamate + L-ornithine. It carries out the reaction L-glutamate + acetyl-CoA = N-acetyl-L-glutamate + CoA + H(+). It participates in amino-acid biosynthesis; L-arginine biosynthesis; L-ornithine and N-acetyl-L-glutamate from L-glutamate and N(2)-acetyl-L-ornithine (cyclic): step 1/1. The protein operates within amino-acid biosynthesis; L-arginine biosynthesis; N(2)-acetyl-L-ornithine from L-glutamate: step 1/4. In terms of biological role, catalyzes two activities which are involved in the cyclic version of arginine biosynthesis: the synthesis of N-acetylglutamate from glutamate and acetyl-CoA as the acetyl donor, and of ornithine by transacetylation between N(2)-acetylornithine and glutamate. The sequence is that of Arginine biosynthesis bifunctional protein ArgJ from Staphylococcus aureus (strain Mu50 / ATCC 700699).